A 168-amino-acid chain; its full sequence is Ribulose bisphosphate carboxylase small subunit, chloroplastic (168 aa).

A chloroplast-targeting transit peptide spans 1-28 (MASIAAKSVSLRAATRRAAPVAAPADAR).

This sequence belongs to the RuBisCO small chain family. As to quaternary structure, heterohexadecamer of 8 large and 8 small subunits.

It localises to the plastid. The protein resides in the chloroplast. RuBisCO catalyzes two reactions: the carboxylation of D-ribulose 1,5-bisphosphate, the primary event in carbon dioxide fixation, as well as the oxidative fragmentation of the pentose substrate. Both reactions occur simultaneously and in competition at the same active site. Although the small subunit is not catalytic it is essential for maximal activity. The polypeptide is Ribulose bisphosphate carboxylase small subunit, chloroplastic (Chlamydomonas moewusii (Chlamydomonas eugametos)).